A 437-amino-acid chain; its full sequence is Putative ABC transporter ATP-binding protein CTC_00753 (437 aa).

ABC transporter domains lie at 1–143 and 179–416; these read MERE…LPTI and LKFK…QISK. 219–226 serves as a coordination point for ATP; that stretch reads GENGAGKS.

The protein belongs to the ABC transporter superfamily.

The protein resides in the cell membrane. In terms of biological role, probably part of an ABC transporter complex. Responsible for energy coupling to the transport system. This Clostridium tetani (strain Massachusetts / E88) protein is Putative ABC transporter ATP-binding protein CTC_00753.